The following is a 454-amino-acid chain: PC-esterase domain-containing protein 1A (454 aa).

The protein belongs to the PC-esterase family.

This Homo sapiens (Human) protein is PC-esterase domain-containing protein 1A (PCED1A).